The primary structure comprises 180 residues: uncharacterized protein (180 aa).

One can recognise a Nudix hydrolase domain in the interval 35 to 163; that stretch reads LRHRATYIVV…TPDSLKALAL (129 aa). The Nudix box signature appears at 72–94; sequence GGVVQADEQLLESARREAEEELG. 2 residues coordinate Mg(2+): glutamate 88 and glutamate 92.

The protein belongs to the Nudix hydrolase family. Mg(2+) is required as a cofactor.

This is an uncharacterized protein from Escherichia coli O157:H7.